The primary structure comprises 185 residues: dCTP deaminase, dUMP-forming (185 aa).

DCTP is bound by residues 99–104, Asp-117, 125–127, Gln-146, Tyr-159, Lys-166, and Gln-170; these read KSSIAR and TLE. Glu-127 serves as the catalytic Proton donor/acceptor.

It belongs to the dCTP deaminase family. Homotrimer.

The catalysed reaction is dCTP + 2 H2O = dUMP + NH4(+) + diphosphate. It functions in the pathway pyrimidine metabolism; dUMP biosynthesis; dUMP from dCTP: step 1/1. Its function is as follows. Bifunctional enzyme that catalyzes both the deamination of dCTP to dUTP and the hydrolysis of dUTP to dUMP without releasing the toxic dUTP intermediate. The polypeptide is dCTP deaminase, dUMP-forming (Methanospirillum hungatei JF-1 (strain ATCC 27890 / DSM 864 / NBRC 100397 / JF-1)).